Consider the following 1170-residue polypeptide: Type I restriction enzyme EcoKI endonuclease subunit (1170 aa).

A coiled-coil region spans residues 143–229 (YHQEVLTLKQ…QERKAYHKEI (87 aa)). The H-T-H motif DNA-binding region spans 431-450 (NQWFADNPGMSELGLRYYQE). Residues 458–639 (KAIVKGQQEI…GEPVYRYTYR (182 aa)) enclose the Helicase ATP-binding domain. ATP is bound at residue 472–478 (ATGTGKT). Residues 574-577 (DEAH) carry the DEAH box motif. One can recognise a Helicase C-terminal domain in the interval 714-879 (ELTNYLDPTG…TLVNEITDSE (166 aa)).

This sequence belongs to the HsdR family. In terms of assembly, the type I restriction/modification system is composed of three polypeptides R, M and S. The restriction enzyme has stoichiometry R(2)M(2)S(1). The methyltransferase is composed of M(2)S(1). As to quaternary structure, (Microbial infection) Interacts with Escherichia phage T7 protein Ocr; this interaction leads to the inhibition of the type I bifunctional endonuclease and methyltransferase restriction enzyme R.EcoKI composed of R(2)M(2)S(1). Post-translationally, upon purification after overexpression about one-third has the initiating methionine removed.

The enzyme catalyses Endonucleolytic cleavage of DNA to give random double-stranded fragments with terminal 5'-phosphates, ATP is simultaneously hydrolyzed.. Its function is as follows. The subtype A restriction (R) subunit of a type I restriction enzyme that recognizes 5'-AACN(6)GTGC-3' and cleaves a random distance away. The R subunit is required for both endonuclease and ATPase activities but not for modification. Has endonucleolytic activity that requires Mg(2+), ATP and S-adenosyl-L-methionine (SAM); ATP can be replaced by dATP, no tested molecule could substitute for SAM. Generates double-stranded DNA with no nicks, by cutting one strand then the other within a few seconds. Cleaves only non-methylated DNA, hemi-methylated and fully methylated DNA are not substrates. After locating a non-methylated recognition site, the enzyme complex serves as a molecular motor that translocates DNA in an ATP-dependent manner until a collision occurs that triggers cleavage. In Escherichia coli (strain K12), this protein is Type I restriction enzyme EcoKI endonuclease subunit.